The primary structure comprises 374 residues: Agmatine deiminase (374 aa).

2 residues coordinate agmatine: Asp220 and Asp226. The active-site Amidino-cysteine intermediate is Cys366.

Belongs to the agmatine deiminase family. As to quaternary structure, forms homodimers.

The enzyme catalyses agmatine + H2O = N-carbamoylputrescine + NH4(+). The protein operates within amine and polyamine biosynthesis; putrescine biosynthesis via agmatine pathway; N-carbamoylputrescine from agmatine: step 1/1. In terms of biological role, mediates the hydrolysis of agmatine into N-carbamoylputrescine in the arginine decarboxylase (ADC) pathway of putrescine biosynthesis, a basic polyamine. This is Agmatine deiminase from Medicago truncatula (Barrel medic).